The following is an 829-amino-acid chain: Probable beta-glucosidase H (829 aa).

An N-linked (GlcNAc...) asparagine glycan is attached at Asn-13. Residue Asp-225 is part of the active site. N-linked (GlcNAc...) asparagine glycans are attached at residues Asn-304, Asn-473, Asn-602, Asn-627, Asn-664, and Asn-749. Positions 389-548 constitute a PA14 domain; the sequence is RMLSNAVIHF…DPEQMVANAV (160 aa).

Belongs to the glycosyl hydrolase 3 family.

The protein localises to the secreted. It carries out the reaction Hydrolysis of terminal, non-reducing beta-D-glucosyl residues with release of beta-D-glucose.. Its pathway is glycan metabolism; cellulose degradation. Beta-glucosidases are one of a number of cellulolytic enzymes involved in the degradation of cellulosic biomass. Catalyzes the last step releasing glucose from the inhibitory cellobiose. The chain is Probable beta-glucosidase H (bglH) from Aspergillus fumigatus (strain CBS 144.89 / FGSC A1163 / CEA10) (Neosartorya fumigata).